The sequence spans 404 residues: Serine/threonine transporter SstT (404 aa).

8 consecutive transmembrane segments (helical) span residues 17–37 (IGIGVVIGVMLGILAPDLTGF), 39–59 (ILGKLFVGGLKAIAPLLVFAL), 75–95 (MTLIIVLYLFGTFASALVAVL), 138–158 (ALATANYIGVLSWAIIFGLAL), 179–199 (IVVWIINLAPIGIMSLVFTTI), 212–232 (FLILVLVGTMLFVALVVNPLI), 287–307 (IPLGATINMGGAAITINVLTL), and 313–333 (FGIPIDFLTALLLSVVAAVSA).

This sequence belongs to the dicarboxylate/amino acid:cation symporter (DAACS) (TC 2.A.23) family.

It is found in the cell membrane. The enzyme catalyses L-serine(in) + Na(+)(in) = L-serine(out) + Na(+)(out). It carries out the reaction L-threonine(in) + Na(+)(in) = L-threonine(out) + Na(+)(out). Involved in the import of serine and threonine into the cell, with the concomitant import of sodium (symport system). The sequence is that of Serine/threonine transporter SstT from Streptococcus pyogenes serotype M1.